The sequence spans 300 residues: Putative S-adenosyl-L-methionine-dependent methyltransferase MMAR_1058 (300 aa).

S-adenosyl-L-methionine-binding positions include Asp-127 and 156-157; that span reads DL.

This sequence belongs to the UPF0677 family.

In terms of biological role, exhibits S-adenosyl-L-methionine-dependent methyltransferase activity. This is Putative S-adenosyl-L-methionine-dependent methyltransferase MMAR_1058 from Mycobacterium marinum (strain ATCC BAA-535 / M).